The primary structure comprises 1442 residues: DNA polymerase III PolC-type (1442 aa).

The Exonuclease domain occupies 409–568; the sequence is YVIFDIETTG…YDAIVLADVF (160 aa).

This sequence belongs to the DNA polymerase type-C family. PolC subfamily.

The protein localises to the cytoplasm. It catalyses the reaction DNA(n) + a 2'-deoxyribonucleoside 5'-triphosphate = DNA(n+1) + diphosphate. In terms of biological role, required for replicative DNA synthesis. This DNA polymerase also exhibits 3' to 5' exonuclease activity. The sequence is that of DNA polymerase III PolC-type from Ureaplasma parvum serovar 3 (strain ATCC 700970).